Consider the following 239-residue polypeptide: 4-hydroxy-tetrahydrodipicolinate reductase (239 aa).

NAD(+) is bound by residues Asp-32, 73–75 (GTT), and 98–101 (ASNF). His-133 acts as the Proton donor/acceptor in catalysis. Residue His-134 coordinates (S)-2,3,4,5-tetrahydrodipicolinate. The active-site Proton donor is Lys-137. 143–144 (GT) is a (S)-2,3,4,5-tetrahydrodipicolinate binding site.

This sequence belongs to the DapB family.

The protein resides in the cytoplasm. The enzyme catalyses (S)-2,3,4,5-tetrahydrodipicolinate + NAD(+) + H2O = (2S,4S)-4-hydroxy-2,3,4,5-tetrahydrodipicolinate + NADH + H(+). It carries out the reaction (S)-2,3,4,5-tetrahydrodipicolinate + NADP(+) + H2O = (2S,4S)-4-hydroxy-2,3,4,5-tetrahydrodipicolinate + NADPH + H(+). The protein operates within amino-acid biosynthesis; L-lysine biosynthesis via DAP pathway; (S)-tetrahydrodipicolinate from L-aspartate: step 4/4. In terms of biological role, catalyzes the conversion of 4-hydroxy-tetrahydrodipicolinate (HTPA) to tetrahydrodipicolinate. This chain is 4-hydroxy-tetrahydrodipicolinate reductase, found in Christiangramia forsetii (strain DSM 17595 / CGMCC 1.15422 / KT0803) (Gramella forsetii).